Reading from the N-terminus, the 125-residue chain is uncharacterized protein (125 aa).

This sequence belongs to the HesB/IscA family.

This is an uncharacterized protein from Azospirillum brasilense.